Here is a 352-residue protein sequence, read N- to C-terminus: Phenylalanine--tRNA ligase alpha subunit (352 aa).

Glutamate 258 provides a ligand contact to Mg(2+).

Belongs to the class-II aminoacyl-tRNA synthetase family. Phe-tRNA synthetase alpha subunit type 1 subfamily. Tetramer of two alpha and two beta subunits. Requires Mg(2+) as cofactor.

It is found in the cytoplasm. It catalyses the reaction tRNA(Phe) + L-phenylalanine + ATP = L-phenylalanyl-tRNA(Phe) + AMP + diphosphate + H(+). The sequence is that of Phenylalanine--tRNA ligase alpha subunit from Staphylococcus carnosus (strain TM300).